Reading from the N-terminus, the 207-residue chain is Outer-membrane lipoprotein LolB (207 aa).

Positions 1-21 are cleaved as a signal peptide; that stretch reads MPLPDFRFIRLLPLAALVLTA. Residue cysteine 22 is the site of N-palmitoyl cysteine attachment. Cysteine 22 carries S-diacylglycerol cysteine lipidation.

It belongs to the LolB family. In terms of assembly, monomer.

Its subcellular location is the cell outer membrane. In terms of biological role, plays a critical role in the incorporation of lipoproteins in the outer membrane after they are released by the LolA protein. The polypeptide is Outer-membrane lipoprotein LolB (Escherichia coli O6:H1 (strain CFT073 / ATCC 700928 / UPEC)).